The primary structure comprises 365 residues: uncharacterized protein (365 aa).

Disordered stretches follow at residues 119–157 (ERSRRLPTAPTSLSGQHRSLRLASKPEREVPLGAGQQES), 216–298 (RPPG…DISH), and 313–365 (SHHH…LSVG). The segment covering 326–340 (SDPRIESRDLPERPQ) has biased composition (basic and acidic residues).

This is an uncharacterized protein from Homo sapiens (Human).